We begin with the raw amino-acid sequence, 643 residues long: Phosphomethylpyrimidine synthase (643 aa).

Substrate-binding positions include N248, M277, Y306, H342, 362-364 (SRG), 403-406 (DGLR), and E442. Residue H446 coordinates Zn(2+). Residue Y469 participates in substrate binding. Residue H510 participates in Zn(2+) binding. The [4Fe-4S] cluster site is built by C590, C593, and C598.

Belongs to the ThiC family. As to quaternary structure, homodimer. [4Fe-4S] cluster serves as cofactor.

The catalysed reaction is 5-amino-1-(5-phospho-beta-D-ribosyl)imidazole + S-adenosyl-L-methionine = 4-amino-2-methyl-5-(phosphooxymethyl)pyrimidine + CO + 5'-deoxyadenosine + formate + L-methionine + 3 H(+). It participates in cofactor biosynthesis; thiamine diphosphate biosynthesis. Its function is as follows. Catalyzes the synthesis of the hydroxymethylpyrimidine phosphate (HMP-P) moiety of thiamine from aminoimidazole ribotide (AIR) in a radical S-adenosyl-L-methionine (SAM)-dependent reaction. The chain is Phosphomethylpyrimidine synthase from Burkholderia orbicola (strain MC0-3).